Here is a 63-residue protein sequence, read N- to C-terminus: Large ribosomal subunit protein uL30 (63 aa).

It belongs to the universal ribosomal protein uL30 family. In terms of assembly, part of the 50S ribosomal subunit.

This chain is Large ribosomal subunit protein uL30, found in Bradyrhizobium sp. (strain BTAi1 / ATCC BAA-1182).